A 248-amino-acid chain; its full sequence is Cobalt transport protein CbiM (248 aa).

The N-terminal stretch at M1 to A31 is a signal peptide. 6 helical membrane passes run L39–L59, V75–V95, L107–F127, T139–W159, L173–V195, and I213–Y233.

Belongs to the CbiM family. As to quaternary structure, forms an energy-coupling factor (ECF) transporter complex composed of an ATP-binding protein (A component, CbiO), a transmembrane protein (T component, CbiQ) and 2 possible substrate-capture proteins (S components, CbiM and CbiN) of unknown stoichimetry.

The protein localises to the cell membrane. The protein operates within cofactor biosynthesis; adenosylcobalamin biosynthesis. Functionally, part of the energy-coupling factor (ECF) transporter complex CbiMNOQ involved in cobalt import. This chain is Cobalt transport protein CbiM, found in Limosilactobacillus reuteri (strain DSM 20016) (Lactobacillus reuteri).